The following is a 112-amino-acid chain: Probable small nuclear ribonucleoprotein Sm D2 (112 aa).

A compositionally biased stretch (basic and acidic residues) spans 1–15; that stretch reads MSRMNDETMEDKPDD. The segment at 1 to 23 is disordered; it reads MSRMNDETMEDKPDDSNGPLSIL. The region spanning 20–106 is the Sm domain; sequence LSILMDSVNN…VILVLKNPLG (87 aa).

It belongs to the snRNP core protein family.

It is found in the nucleus. The protein resides in the cytoplasm. Its subcellular location is the cytosol. In terms of biological role, plays a role in pre-mRNA splicing as a core component of the spliceosomal U1, U2, U4 and U5 small nuclear ribonucleoproteins (snRNPs), the building blocks of the spliceosome. The chain is Probable small nuclear ribonucleoprotein Sm D2 (snrpd2) from Dictyostelium discoideum (Social amoeba).